Here is a 626-residue protein sequence, read N- to C-terminus: Chaperone protein HtpG (626 aa).

Positions 1-331 (MSETVERHEF…TDDLPLNVSR (331 aa)) are a; substrate-binding. Positions 332 to 544 (EMLQSTPTLQ…GMGPDLQMQR (213 aa)) are b. Residues 545–626 (LLRRAGRGFG…GTAAKPAGSA (82 aa)) are c.

Belongs to the heat shock protein 90 family. As to quaternary structure, homodimer.

The protein resides in the cytoplasm. Molecular chaperone. Has ATPase activity. The polypeptide is Chaperone protein HtpG (Methylorubrum extorquens (strain CM4 / NCIMB 13688) (Methylobacterium extorquens)).